The chain runs to 213 residues: Protein RCR1 (213 aa).

Residues 1–39 are Lumenal-facing; sequence MGLISYENEAINEVKKADNHHVSKFVTSYYGPSSSSWQS. A helical transmembrane segment spans residues 40 to 62; it reads GIWILFVLFVAAVILIILFTFVA. Over 63-213 the chain is Cytoplasmic; it reads NRRRRRMGRA…PERAKVNARS (151 aa). Positions 104–107 match the PY motif motif; the sequence is VPEY. Residues 190-213 are disordered; that stretch reads ERLPGGTTTQEINPPERAKVNARS. The span at 203–213 shows a compositional bias: basic and acidic residues; sequence PPERAKVNARS.

In terms of assembly, interacts with PMT4 and WW domain of RSP5.

The protein localises to the endoplasmic reticulum membrane. Regulates chitin deposition in the cell wall. This chain is Protein RCR1 (RCR1), found in Saccharomyces cerevisiae (strain ATCC 204508 / S288c) (Baker's yeast).